We begin with the raw amino-acid sequence, 109 residues long: uncharacterized protein (109 aa).

The protein belongs to the archaeal ATPase family.

This is an uncharacterized protein from Methanocaldococcus jannaschii (strain ATCC 43067 / DSM 2661 / JAL-1 / JCM 10045 / NBRC 100440) (Methanococcus jannaschii).